Reading from the N-terminus, the 310-residue chain is Olfactory receptor 9Q1 (310 aa).

Residues 1-25 (MAEMNLTLVTEFLLIAFTEYPEWAL) are Extracellular-facing. N-linked (GlcNAc...) asparagine glycosylation occurs at N5. A helical transmembrane segment spans residues 26–46 (PLFLLFLFMYLITVLGNLEMI). Residues 47–54 (ILILMDHQ) lie on the Cytoplasmic side of the membrane. A helical transmembrane segment spans residues 55–75 (LHAPMYFLLSHLAFMDVCYSS). Residues 76–99 (ITVPQMLAVLLEHGAALSYTRCAA) are Extracellular-facing. C97 and C189 are disulfide-bonded. A helical membrane pass occupies residues 100–120 (QFFLFTFFGSIDCYLLALMAY). Topologically, residues 121–139 (DRYLAVCQPLLYVTILTQQ) are cytoplasmic. A helical transmembrane segment spans residues 140-160 (ARLSLVAGAYVAGLISALVRT). Residues 161–197 (VSAFTLSFCGTSEIDFIFCDLPPLLKLTCGESYTQEV) lie on the Extracellular side of the membrane. A helical transmembrane segment spans residues 198 to 217 (LIIMFAIFVIPASMVVILVS). At 218–236 (YLFIIVAIMGIPAGSQAKT) the chain is on the cytoplasmic side. A helical transmembrane segment spans residues 237–257 (FSTCTSHLTAVSLFFGTLIFM). At 258–270 (YLRGNSDQSSEKN) the chain is on the extracellular side. Residues 271–291 (RVVSVLYTEVIPMLNPLIYSL) form a helical membrane-spanning segment. The Cytoplasmic segment spans residues 292-310 (RNKEVKEALRKILNRAKLS).

The protein belongs to the G-protein coupled receptor 1 family.

The protein resides in the cell membrane. In terms of biological role, odorant receptor. The protein is Olfactory receptor 9Q1 (OR9Q1) of Homo sapiens (Human).